Reading from the N-terminus, the 495-residue chain is Trigger factor (495 aa).

The 86-residue stretch at 169 to 254 folds into the PPIase FKBP-type domain; sequence GDRVTIDYLG…VKEVAAPGEV (86 aa). Residues 439–495 form a disordered region; sequence ALLADDESEDKPAAKKAAPKKKAAKAEATEAAAEGEEAAVPKKKAAPKKKAAEDSAE.

The protein belongs to the FKBP-type PPIase family. Tig subfamily.

Its subcellular location is the cytoplasm. The catalysed reaction is [protein]-peptidylproline (omega=180) = [protein]-peptidylproline (omega=0). In terms of biological role, involved in protein export. Acts as a chaperone by maintaining the newly synthesized protein in an open conformation. Functions as a peptidyl-prolyl cis-trans isomerase. This chain is Trigger factor, found in Rhizobium rhizogenes (strain K84 / ATCC BAA-868) (Agrobacterium radiobacter).